We begin with the raw amino-acid sequence, 496 residues long: Glycylpeptide N-tetradecanoyltransferase 1 (496 aa).

The disordered stretch occupies residues 1 to 82 (MADESETAVK…SAQDQPVKMN (82 aa)). 2 positions are modified to phosphoserine: S31 and S47. Basic residues predominate over residues 55–66 (KKKKKKQKKKKE). At S83 the chain carries Phosphoserine. Q118, F119, W120, F247, L248, C249, V250, S256, R258, V259, and A260 together coordinate tetradecanoyl-CoA.

This sequence belongs to the NMT family.

It localises to the cytoplasm. The protein resides in the cytosol. The protein localises to the membrane. The catalysed reaction is N-terminal glycyl-[protein] + tetradecanoyl-CoA = N-tetradecanoylglycyl-[protein] + CoA + H(+). It carries out the reaction N-terminal glycyl-L-lysyl-[protein] + tetradecanoyl-CoA = N-terminal glycyl-(N(6)-tetradecanoyl)-L-lysyl-[protein] + CoA + H(+). Its function is as follows. Adds a myristoyl group to the N-terminal glycine residue of certain cellular and viral proteins. Also able to mediate N-terminal lysine myristoylation of proteins: catalyzes myristoylation of ARF6 on both 'Gly-2' and 'Lys-3'. Lysine myristoylation is required to maintain ARF6 on membranes during the GTPase cycle. The chain is Glycylpeptide N-tetradecanoyltransferase 1 (NMT1) from Pongo abelii (Sumatran orangutan).